A 542-amino-acid polypeptide reads, in one-letter code: Major facilitator superfamily domain-containing protein 6-like (542 aa).

A run of 11 helical transmembrane segments spans residues 46-66 (LGLS…LALL), 89-109 (LLSS…GILV), 198-218 (MFFL…PLEW), 246-266 (VGAA…FCRI), 272-292 (FYSY…LPIY), 321-341 (VTVI…LWLM), 352-372 (GICL…AGPL), 381-401 (WMLV…SFLW), 404-424 (WAVM…WWSV), 444-464 (FEAF…GFVV), and 469-489 (VNVL…ALAV).

This sequence belongs to the major facilitator superfamily. MFSD6 family.

The protein localises to the membrane. The polypeptide is Major facilitator superfamily domain-containing protein 6-like (mfsd6l) (Danio rerio (Zebrafish)).